The sequence spans 382 residues: MSTWLLPENIADVLPSEARKIEELRRRLLDRFRSYGYEMVMPPLLEYLESLLTSGGADLRLRTFKLVDQLSGRTLGLRADITPQVARIDAHLLNRQGVTRLCYAGHVMHTRPRGLHATREQIQIGAEIYGHAGLEADLEIQQLMLDALHLAGLSRIRLDLGHAGVLAALLARDAQAAERGESLYDALSGKDVPLLNELTDDLGADTRAALRALPNLYGDASVLAEARTRLPVLPEITRALDDLAQLASQPKGVEVAIDLADLRGYAYHSGAMFSAYIDGVPNAIARGGRYDHVGQAYGRARPATGFSLDLRELARISPVEARGTAILAPWAQDDALGAAVAALRDAGEVVIQALPGHDHVLDEFACDRSLVERNGAWVVEPR.

This sequence belongs to the class-II aminoacyl-tRNA synthetase family. HisZ subfamily. Heteromultimer composed of HisG and HisZ subunits.

It localises to the cytoplasm. It participates in amino-acid biosynthesis; L-histidine biosynthesis; L-histidine from 5-phospho-alpha-D-ribose 1-diphosphate: step 1/9. Required for the first step of histidine biosynthesis. May allow the feedback regulation of ATP phosphoribosyltransferase activity by histidine. This is ATP phosphoribosyltransferase regulatory subunit from Burkholderia cenocepacia (strain ATCC BAA-245 / DSM 16553 / LMG 16656 / NCTC 13227 / J2315 / CF5610) (Burkholderia cepacia (strain J2315)).